The chain runs to 1320 residues: Immunoglobulin superfamily member 1 (1320 aa).

The signal sequence occupies residues 1 to 18; the sequence is MMLRTFTLLLLCIWLNRG. The Extracellular portion of the chain corresponds to 19–504; it reads MTSMAAVESQ…LPWNSILNEA (486 aa). Ig-like C2-type domains are found at residues 29–113, 115–212, 224–308, 312–399, and 401–482; these read PELW…KILE, EAPG…KLVV, HPGP…IWVT, PKTW…ATYN, and VELI…HRSE. N-linked (GlcNAc...) asparagine glycosylation is present at asparagine 44. A disulfide bond links cysteine 49 and cysteine 97. Residues asparagine 329, asparagine 365, and asparagine 372 are each glycosylated (N-linked (GlcNAc...) asparagine). 2 disulfide bridges follow: cysteine 334–cysteine 383 and cysteine 423–cysteine 466. The helical transmembrane segment at 505-525 threads the bilayer; the sequence is IRVSLTVQFLSLLLLVLWLQW. Over 526–534 the chain is Cytoplasmic; it reads KCRRLRLRE. The chain crosses the membrane as a helical span at residues 535 to 555; it reads AWLLGTAQGVAMLVILIALLC. Topologically, residues 556 to 1320 are extracellular; it reads CGLCNGALTE…GVSVEQTVPI (765 aa). 7 consecutive Ig-like C2-type domains span residues 572–665, 662–756, 761–853, 857–942, 949–1044, 1049–1134, and 1145–1226; these read PTPK…VGTD, VGTD…ELVI, PKPF…LIVT, PKPT…YLST, TDTF…ELIV, PKPS…NHSN, and PKPS…EPSD. N-linked (GlcNAc...) asparagine glycans are attached at residues asparagine 591, asparagine 731, asparagine 782, asparagine 830, asparagine 874, asparagine 923, asparagine 970, asparagine 1011, and asparagine 1066. Residues cysteine 783 and cysteine 833 are joined by a disulfide bond. Cysteine 879 and cysteine 926 are disulfide-bonded. A disulfide bridge links cysteine 1071 with cysteine 1118. 2 N-linked (GlcNAc...) asparagine glycosylation sites follow: asparagine 1131 and asparagine 1207. An intrachain disulfide couples cysteine 1167 to cysteine 1210.

Interacts with INHA; the interaction is not confirmed by standard receptor binding assays. Interacts with ACVR1B; the interaction appears to be ligand-dependent as it is diminished by inhibin B and activin A. Interacts with ACVR2A, ACVR2B, ACVRL1 and BMPR1B. Interacts with HECTD1. Expressed in pituitary gland, testis and liver. Isoform 2 is expressed pituitary gland and testis.

It is found in the membrane. It localises to the secreted. Its function is as follows. Seems to be a coreceptor in inhibin signaling, but seems not to be a high-affinity inhibin receptor. Antagonizes activin A signaling in the presence or absence of inhibin B. Necessary to mediate a specific antagonistic effect of inhibin B on activin-stimulated transcription. This Rattus norvegicus (Rat) protein is Immunoglobulin superfamily member 1 (Igsf1).